The following is a 440-amino-acid chain: Transposon TyH3 Gag polyprotein (440 aa).

Polar residues-rich tracts occupy residues 1 to 23, 48 to 60, and 127 to 152; these read MESQQLSQHSPNSHGSACASVTS, TKANSQQTTTPAS, and QSQFPQYPSSVGTPLSTPSPESGNTF. Disordered regions lie at residues 1–93, 126–173, and 352–440; these read MESQ…MMTQ, PQSQ…RPPP, and GSRN…PETY. The segment covering 153-165 has biased composition (low complexity); that stretch reads TDSSSADSDMTST. The tract at residues 299–401 is RNA-binding; the sequence is NNGIHINNKV…NSKSKTARAH (103 aa). Low complexity predominate over residues 402 to 418; the sequence is NVSTSNNSPSTDNDSIS. At Ser416 the chain carries Phosphoserine. The segment covering 419 to 428 has biased composition (polar residues); that stretch reads KSTTEPIQLN. Residues 429–440 show a composition bias toward basic and acidic residues; sequence NKHDLHLRPETY.

As to quaternary structure, homotrimer.

Its subcellular location is the cytoplasm. Capsid protein (CA) is the structural component of the virus-like particle (VLP), forming the shell that encapsulates the retrotransposons dimeric RNA genome. The particles are assembled from trimer-clustered units and there are holes in the capsid shells that allow for the diffusion of macromolecules. CA also has nucleocapsid-like chaperone activity, promoting primer tRNA(i)-Met annealing to the multipartite primer-binding site (PBS), dimerization of Ty1 RNA and initiation of reverse transcription. This chain is Transposon TyH3 Gag polyprotein (TY1A), found in Saccharomyces cerevisiae (Baker's yeast).